Here is a 142-residue protein sequence, read N- to C-terminus: Endoribonuclease YbeY (142 aa).

Positions 107, 111, and 117 each coordinate Zn(2+).

The protein belongs to the endoribonuclease YbeY family. Zn(2+) serves as cofactor.

The protein localises to the cytoplasm. Functionally, single strand-specific metallo-endoribonuclease involved in late-stage 70S ribosome quality control and in maturation of the 3' terminus of the 16S rRNA. This is Endoribonuclease YbeY from Parabacteroides distasonis (strain ATCC 8503 / DSM 20701 / CIP 104284 / JCM 5825 / NCTC 11152).